Here is a 355-residue protein sequence, read N- to C-terminus: DNA polymerase IV (355 aa).

A UmuC domain is found at 7-188; the sequence is IIHIDMDCFY…LPVRKLFGVG (182 aa). Mg(2+)-binding residues include Asp-11 and Asp-106. Glu-107 is an active-site residue.

The protein belongs to the DNA polymerase type-Y family. Monomer. It depends on Mg(2+) as a cofactor.

Its subcellular location is the cytoplasm. The catalysed reaction is DNA(n) + a 2'-deoxyribonucleoside 5'-triphosphate = DNA(n+1) + diphosphate. Poorly processive, error-prone DNA polymerase involved in untargeted mutagenesis. Copies undamaged DNA at stalled replication forks, which arise in vivo from mismatched or misaligned primer ends. These misaligned primers can be extended by PolIV. Exhibits no 3'-5' exonuclease (proofreading) activity. May be involved in translesional synthesis, in conjunction with the beta clamp from PolIII. This chain is DNA polymerase IV, found in Legionella pneumophila (strain Paris).